The chain runs to 254 residues: 3-deoxy-manno-octulosonate cytidylyltransferase (254 aa).

The protein belongs to the KdsB family.

It localises to the cytoplasm. The enzyme catalyses 3-deoxy-alpha-D-manno-oct-2-ulosonate + CTP = CMP-3-deoxy-beta-D-manno-octulosonate + diphosphate. It functions in the pathway nucleotide-sugar biosynthesis; CMP-3-deoxy-D-manno-octulosonate biosynthesis; CMP-3-deoxy-D-manno-octulosonate from 3-deoxy-D-manno-octulosonate and CTP: step 1/1. The protein operates within bacterial outer membrane biogenesis; lipopolysaccharide biosynthesis. Activates KDO (a required 8-carbon sugar) for incorporation into bacterial lipopolysaccharide in Gram-negative bacteria. The polypeptide is 3-deoxy-manno-octulosonate cytidylyltransferase (Pseudoalteromonas atlantica (strain T6c / ATCC BAA-1087)).